A 69-amino-acid chain; its full sequence is Pancreatic propolypeptide YG (69 aa).

This sequence belongs to the NPY family.

It is found in the secreted. This is Pancreatic propolypeptide YG from Lophius americanus (American angler).